The sequence spans 492 residues: Bifunctional protein GlmU (492 aa).

Residues 1-241 (MTFRGDTAVV…SALVAGVNDR (241 aa)) form a pyrophosphorylase region. UDP-N-acetyl-alpha-D-glucosamine is bound by residues 12-15 (LAAG), K26, Q83, and 88-89 (GT). D114 serves as a coordination point for Mg(2+). Residues G151, E166, N181, and N239 each coordinate UDP-N-acetyl-alpha-D-glucosamine. N239 contributes to the Mg(2+) binding site. Residues 242–262 (VQLAQLGAELNRRIVAAHQMA) form a linker region. Residues 263-492 (GVTVIDPATT…TPPPDADHPP (230 aa)) are N-acetyltransferase. R344 and K362 together coordinate UDP-N-acetyl-alpha-D-glucosamine. H374 functions as the Proton acceptor in the catalytic mechanism. UDP-N-acetyl-alpha-D-glucosamine-binding residues include Y377 and N388. Residues A391, 397-398 (NY), and A434 each bind acetyl-CoA. Positions 443–492 (PPGALAVSGGPQRNIEDWVQQKRPGTPSAEAARKASAEQSTPPPDADHPP) are disordered.

It in the N-terminal section; belongs to the N-acetylglucosamine-1-phosphate uridyltransferase family. The protein in the C-terminal section; belongs to the transferase hexapeptide repeat family. As to quaternary structure, homotrimer. The cofactor is Mg(2+).

It localises to the cytoplasm. The enzyme catalyses alpha-D-glucosamine 1-phosphate + acetyl-CoA = N-acetyl-alpha-D-glucosamine 1-phosphate + CoA + H(+). It carries out the reaction N-acetyl-alpha-D-glucosamine 1-phosphate + UTP + H(+) = UDP-N-acetyl-alpha-D-glucosamine + diphosphate. Its pathway is nucleotide-sugar biosynthesis; UDP-N-acetyl-alpha-D-glucosamine biosynthesis; N-acetyl-alpha-D-glucosamine 1-phosphate from alpha-D-glucosamine 6-phosphate (route II): step 2/2. It participates in nucleotide-sugar biosynthesis; UDP-N-acetyl-alpha-D-glucosamine biosynthesis; UDP-N-acetyl-alpha-D-glucosamine from N-acetyl-alpha-D-glucosamine 1-phosphate: step 1/1. The protein operates within bacterial outer membrane biogenesis; LPS lipid A biosynthesis. Catalyzes the last two sequential reactions in the de novo biosynthetic pathway for UDP-N-acetylglucosamine (UDP-GlcNAc). The C-terminal domain catalyzes the transfer of acetyl group from acetyl coenzyme A to glucosamine-1-phosphate (GlcN-1-P) to produce N-acetylglucosamine-1-phosphate (GlcNAc-1-P), which is converted into UDP-GlcNAc by the transfer of uridine 5-monophosphate (from uridine 5-triphosphate), a reaction catalyzed by the N-terminal domain. The protein is Bifunctional protein GlmU of Mycobacterium ulcerans (strain Agy99).